The primary structure comprises 400 residues: MKGSLLLAGATLLGCTSAKLHSLKLKKVSLKEQLEHADIDVQIKSLGQKYMGIRPEQHEQQMFKEQTPIEVESGHNVLIDNFLNAQYFSEISIGTPPQTFKVVLDTGSSNLWVPGKDCSSIACFLHSTYDSSASSTYSKNGTKFAIRYGSGSLEGFVSRDSVKIGDMTIKKQLFAEATSEPGLAFAFGRFDGIMGMGFSSISVNGITPPFYNMIDQGLIDEPVFSFYLGDTNKDGDQSVVTFGGSDTNHFTGDMTTIPLRRKAYWEVDFDAISLGKDTAALENTGIILDTGTSLIALPTTLAEMINTQIGATKSWNGQYTLDCAKRDSLPDVTFTLSGHNFTIGPHDYTLEVSGTCISSFMGMDFPEPVGPLAILGDSFLRRYYSVYDLGKGTVGLAKAK.

The signal sequence occupies residues 1-18 (MKGSLLLAGATLLGCTSA). A propeptide spans 19 to 72 (KLHSLKLKKVSLKEQLEHADIDVQIKSLGQKYMGIRPEQHEQQMFKEQTPIEVE) (activation peptide). A Peptidase A1 domain is found at 87–397 (YFSEISIGTP…DLGKGTVGLA (311 aa)). Asp-105 is a catalytic residue. Cys-118 and Cys-123 form a disulfide bridge. N-linked (GlcNAc...) asparagine glycosylation occurs at Asn-140. Asp-289 is an active-site residue. Cys-323 and Cys-356 form a disulfide bridge. N-linked (GlcNAc...) asparagine glycosylation is present at Asn-340.

The protein belongs to the peptidase A1 family.

The protein resides in the vacuole lumen. Its subcellular location is the secreted. It carries out the reaction Hydrolysis of proteins with broad specificity for peptide bonds. Cleaves -Leu-Leu-|-Val-Tyr- bond in a synthetic substrate. Does not act on esters of Tyr or Arg.. Functionally, vacuolar aspartic endopeptidase which is probably also secreted and contributes to virulence. The sequence is that of Probable vacuolar protease A (PEP2) from Arthroderma benhamiae (strain ATCC MYA-4681 / CBS 112371) (Trichophyton mentagrophytes).